The following is a 467-amino-acid chain: UDP-N-acetylmuramoylalanine--D-glutamate ligase (467 aa).

Residue Gly-121 to Thr-127 participates in ATP binding.

This sequence belongs to the MurCDEF family.

It is found in the cytoplasm. The catalysed reaction is UDP-N-acetyl-alpha-D-muramoyl-L-alanine + D-glutamate + ATP = UDP-N-acetyl-alpha-D-muramoyl-L-alanyl-D-glutamate + ADP + phosphate + H(+). It functions in the pathway cell wall biogenesis; peptidoglycan biosynthesis. Its function is as follows. Cell wall formation. Catalyzes the addition of glutamate to the nucleotide precursor UDP-N-acetylmuramoyl-L-alanine (UMA). The chain is UDP-N-acetylmuramoylalanine--D-glutamate ligase from Brucella abortus (strain 2308).